A 342-amino-acid chain; its full sequence is L-threonine 3-dehydrogenase (342 aa).

Cys38 provides a ligand contact to Zn(2+). Residues Thr40 and His43 each act as charge relay system in the active site. Zn(2+)-binding residues include His63, Glu64, Cys93, Cys96, Cys99, and Cys107. NAD(+)-binding positions include Ile175, Asp195, Arg200, 262–264, and 286–287; these read LGL and IY.

The protein belongs to the zinc-containing alcohol dehydrogenase family. As to quaternary structure, homotetramer. The cofactor is Zn(2+).

Its subcellular location is the cytoplasm. It catalyses the reaction L-threonine + NAD(+) = (2S)-2-amino-3-oxobutanoate + NADH + H(+). The protein operates within amino-acid degradation; L-threonine degradation via oxydo-reductase pathway; glycine from L-threonine: step 1/2. In terms of biological role, catalyzes the NAD(+)-dependent oxidation of L-threonine to 2-amino-3-ketobutyrate. This chain is L-threonine 3-dehydrogenase, found in Streptomyces avermitilis (strain ATCC 31267 / DSM 46492 / JCM 5070 / NBRC 14893 / NCIMB 12804 / NRRL 8165 / MA-4680).